A 435-amino-acid polypeptide reads, in one-letter code: MESDSGQPLNNRDIVPFRKPRRPQETFKKVGIPIIAVLLSLIALVIVALLIKVILDKYYFICGSPLTFIQRGQLCDGHLDCASGEDEEHCVKDFPEKPGVAVRLSKDRSTLQVLDAATGTWASVCFDNFTEALAKTACRQMGYDSQPAFRAVEIRPDQNLPVAQVTGNSQELQVQNGSRSCLSGSLVSLRCLDCGKSLKTPRVVGGVEAPVDSWPWQVSIQYNKQHVCGGSILDPHWILTAAHCFRKYLDVSSWKVRAGSNILGNSPSLPVAKIFIAEPNPLYPKEKDIALVKLQMPLTFSGSVRPICLPFSDEVLVPATPVWVIGWGFTEENGGKMSDMLLQASVQVIDSTRCNAEDAYEGEVTAEMLCAGTPQGGKDTCQGDSGGPLMYHSDKWQVVGIVSWGHGCGGPSTPGVYTKVTAYLNWIYNVRKSEM.

The Cytoplasmic segment spans residues 1–30 (MESDSGQPLNNRDIVPFRKPRRPQETFKKV). The chain crosses the membrane as a helical; Signal-anchor for type II membrane protein span at residues 31-51 (GIPIIAVLLSLIALVIVALLI). The Extracellular portion of the chain corresponds to 52 to 435 (KVILDKYYFI…WIYNVRKSEM (384 aa)). In terms of domain architecture, LDL-receptor class A spans 59-101 (YFICGSPLTFIQRGQLCDGHLDCASGEDEEHCVKDFPEKPGVA). 8 disulfide bridges follow: Cys62–Cys81, Cys75–Cys90, Cys125–Cys181, Cys138–Cys191, Cys194–Cys308, Cys228–Cys244, Cys354–Cys370, and Cys381–Cys408. One can recognise an SRCR domain in the interval 102-202 (VRLSKDRSTL…DCGKSLKTPR (101 aa)). Residues Asn128 and Asn176 are each glycosylated (N-linked (GlcNAc...) asparagine). A Peptidase S1 domain is found at 203–432 (VVGGVEAPVD…YLNWIYNVRK (230 aa)). Active-site charge relay system residues include His243 and Asp288. The active-site Charge relay system is Ser385.

Belongs to the peptidase S1 family. Proteolytically processed; probably by an autocatalytic mechanism.

It is found in the cell membrane. Its subcellular location is the secreted. Its function is as follows. Plasma membrane-anchored serine protease that directly induces processing of pro-uPA/PLAU into the active form through proteolytic activity. Seems to be capable of activating ENaC. The chain is Transmembrane protease serine 4 from Mus musculus (Mouse).